The sequence spans 197 residues: MTLDELIDKLAAKSRILITKVTVKDHLAYKIEPHFLLPFLKALKESEELRFTVLTDLFGVDFPKREKRFEIVYNLLSLKLNKNLIIKTNISEKESIPSAMKILSAACWYELEVYDMYGVNFNGNNDKRRILTDYDFEGHPLRKDFPLTGYTQVKYDKKLKKIAYEPVNLDIEYREFDFSSHWHSPSYILPGDEKAEK.

The protein belongs to the complex I 30 kDa subunit family. As to quaternary structure, NDH-1 is composed of 14 different subunits. Subunits NuoB, C, D, E, F, and G constitute the peripheral sector of the complex.

Its subcellular location is the cell inner membrane. It carries out the reaction a quinone + NADH + 5 H(+)(in) = a quinol + NAD(+) + 4 H(+)(out). Its function is as follows. NDH-1 shuttles electrons from NADH, via FMN and iron-sulfur (Fe-S) centers, to quinones in the respiratory chain. The immediate electron acceptor for the enzyme in this species is believed to be ubiquinone. Couples the redox reaction to proton translocation (for every two electrons transferred, four hydrogen ions are translocated across the cytoplasmic membrane), and thus conserves the redox energy in a proton gradient. The protein is NADH-quinone oxidoreductase subunit C of Rickettsia typhi (strain ATCC VR-144 / Wilmington).